The following is an 88-amino-acid chain: MDIQLINIGFGNIVSANRVIAIVSPESAPIKRIISDARERGQLIDATYGRRTRAVIITDSSHVVLSAIQPETVAHRFVVNKEVQANSN.

The protein belongs to the RemA family.

This chain is Putative regulatory protein PCC7424_3427, found in Gloeothece citriformis (strain PCC 7424) (Cyanothece sp. (strain PCC 7424)).